Consider the following 484-residue polypeptide: ATP synthase subunit beta (484 aa).

162-169 (GGAGVGKT) lines the ATP pocket.

It belongs to the ATPase alpha/beta chains family. As to quaternary structure, F-type ATPases have 2 components, CF(1) - the catalytic core - and CF(0) - the membrane proton channel. CF(1) has five subunits: alpha(3), beta(3), gamma(1), delta(1), epsilon(1). CF(0) has four main subunits: a(1), b(1), b'(1) and c(9-12).

The protein localises to the cellular thylakoid membrane. The catalysed reaction is ATP + H2O + 4 H(+)(in) = ADP + phosphate + 5 H(+)(out). Functionally, produces ATP from ADP in the presence of a proton gradient across the membrane. The catalytic sites are hosted primarily by the beta subunits. In Trichodesmium erythraeum (strain IMS101), this protein is ATP synthase subunit beta.